Here is a 511-residue protein sequence, read N- to C-terminus: ATP synthase subunit alpha (511 aa).

An ATP-binding site is contributed by 169–176 (GDRQTGKT).

This sequence belongs to the ATPase alpha/beta chains family. F-type ATPases have 2 components, CF(1) - the catalytic core - and CF(0) - the membrane proton channel. CF(1) has five subunits: alpha(3), beta(3), gamma(1), delta(1), epsilon(1). CF(0) has three main subunits: a(1), b(2) and c(9-12). The alpha and beta chains form an alternating ring which encloses part of the gamma chain. CF(1) is attached to CF(0) by a central stalk formed by the gamma and epsilon chains, while a peripheral stalk is formed by the delta and b chains.

It localises to the cell inner membrane. It catalyses the reaction ATP + H2O + 4 H(+)(in) = ADP + phosphate + 5 H(+)(out). In terms of biological role, produces ATP from ADP in the presence of a proton gradient across the membrane. The alpha chain is a regulatory subunit. The sequence is that of ATP synthase subunit alpha from Janthinobacterium sp. (strain Marseille) (Minibacterium massiliensis).